Consider the following 75-residue polypeptide: Defensin-like protein 59 (75 aa).

An N-terminal signal peptide occupies residues 1–19; sequence MNITKSYVVIFFLVMLTNS. 4 disulfides stabilise this stretch: Cys-39-Cys-73, Cys-43-Cys-66, Cys-52-Cys-71, and Cys-56-Cys-72.

This sequence belongs to the DEFL family.

The protein resides in the secreted. In Arabidopsis thaliana (Mouse-ear cress), this protein is Defensin-like protein 59.